The following is a 364-amino-acid chain: MALFNSAHGGNIREAATVLGISPDQLLDFSANINPLGMPVSVKRALIDNLDCIERYPDADYFHLHQALARHHQVPASWILAGNGETESIFTVASGLKPRRAMIVTPGFAEYGRALAQSGCEIRRWSLREADGWQLTDAILEALTPDLDCLFLCTPNNPTGLLPERPLLQAIADRCKSLNINLILDEAFIDFIPHETGFIPALKDNPHIWVLRSLTKFYAIPGLRLGYLVNSDDAAMARMRRQQMPWSVNALAALAGEVALQDSAWQQATWHWLREEGARFYQALCQLPLLTVYPGRANYLLLRCEREDIDLQRRLLTQRILIRSCANYPGLDSRYYRVAIRSAAQNERLLAALRNVLTGIAPAD.

O-phospho-L-threonine contacts are provided by residues 8–9 (HG), asparagine 32, and asparagine 157. Residue lysine 216 is modified to N6-(pyridoxal phosphate)lysine. Residues arginine 323 and arginine 337 each coordinate O-phospho-L-threonine.

It belongs to the class-II pyridoxal-phosphate-dependent aminotransferase family. Homodimer. Requires pyridoxal 5'-phosphate as cofactor.

It catalyses the reaction O-phospho-L-threonine + H(+) = (R)-1-aminopropan-2-yl phosphate + CO2. It participates in cofactor biosynthesis; adenosylcobalamin biosynthesis. In terms of biological role, decarboxylates L-threonine-O-3-phosphate to yield (R)-1-amino-2-propanol O-2-phosphate, the precursor for the linkage between the nucleotide loop and the corrin ring in cobalamin. In Salmonella typhimurium (strain LT2 / SGSC1412 / ATCC 700720), this protein is Threonine-phosphate decarboxylase (cobD).